Consider the following 146-residue polypeptide: MKLHELKPSEGSRKTRNRVGRGIGSGNGKTAGKGHKGQNARSGGGVRPGFEGGQMPLFQRLPKRGFTNINRKEYAVVNLDKLNGFAEGTEVTPELLLETGVISKLNAGVKILGNGKLEKKLTVKANKFSASAKEAVEAAGGTAEVI.

The segment covering 1-13 (MKLHELKPSEGSR) has biased composition (basic and acidic residues). The tract at residues 1–57 (MKLHELKPSEGSRKTRNRVGRGIGSGNGKTAGKGHKGQNARSGGGVRPGFEGGQMPL) is disordered. Gly residues-rich tracts occupy residues 21–31 (RGIGSGNGKTA) and 42–52 (SGGGVRPGFEG).

It belongs to the universal ribosomal protein uL15 family. In terms of assembly, part of the 50S ribosomal subunit.

Binds to the 23S rRNA. This Bacillus subtilis (strain 168) protein is Large ribosomal subunit protein uL15.